Consider the following 391-residue polypeptide: uncharacterized protein (391 aa).

Positions 1–20 (MRKLFLLSILMIGVIVAFAG) are cleaved as a signal peptide. Cys21 is lipidated: S-archaeol cysteine. The region spanning 104–377 (RIVTDFYCPI…DFAKMIHPEL (274 aa)) is the Fe/B12 periplasmic-binding domain.

The protein resides in the cell membrane. This is an uncharacterized protein from Methanocaldococcus jannaschii (strain ATCC 43067 / DSM 2661 / JAL-1 / JCM 10045 / NBRC 100440) (Methanococcus jannaschii).